We begin with the raw amino-acid sequence, 292 residues long: Protease HtpX (292 aa).

Helical transmembrane passes span 5-25 (IFLF…VMSV) and 34-54 (SGLL…SLLL). Zn(2+) is bound at residue H140. E141 is an active-site residue. H144 contacts Zn(2+). A run of 2 helical transmembrane segments spans residues 155-175 (LLQG…GGII) and 193-213 (IIVF…AMWF). Position 218 (E218) interacts with Zn(2+).

It belongs to the peptidase M48B family. The cofactor is Zn(2+).

It is found in the cell inner membrane. The sequence is that of Protease HtpX from Xanthomonas oryzae pv. oryzae (strain PXO99A).